The following is a 395-amino-acid chain: MAKLGTPLSPSATRVLLLGSGELGKEVAIELQRLGVEVIAADRYADAPAMQVAHRSHVIDMLDAMALRALIAQEQPHLVVPEIEAIHTETLVQLEQEQGLRVIPTARAARLTMDREGIRRLAAETLGLPTSPYRFVDTEAEYRAAVAAIGLPCVVKPVMSSSGKGQSTLRSEADIAPAWEYAQTGGRAGAGRCIVEGFIDFDYEITLLTVRHAGGTSFCAPIGHLQKDGDYRESWQPQPMSSAALARAEEISRAITDDLGGWGLFGVELFVKGDEVWFSEVSPRPHDTGLVTLVSQELSEFALHARAILGLPIPVIRQSGPSASCALLAHGEGVPYFNNVAAALRVPDTAVRLFGKPSVHGHRRVGVTLARAETIDEARAIARDAADAIGVELRP.

N(1)-(5-phospho-beta-D-ribosyl)glycinamide contacts are provided by residues 22 to 23 (EL) and E82. Residues R115, K156, 161–166 (SSGKGQ), 196–199 (EGFI), and E204 contribute to the ATP site. In terms of domain architecture, ATP-grasp spans 120–309 (RLAAETLGLP…EFALHARAIL (190 aa)). Positions 268 and 280 each coordinate Mg(2+). Residues D287, K356, and 363 to 364 (RR) contribute to the N(1)-(5-phospho-beta-D-ribosyl)glycinamide site.

It belongs to the PurK/PurT family. Homodimer.

It catalyses the reaction N(1)-(5-phospho-beta-D-ribosyl)glycinamide + formate + ATP = N(2)-formyl-N(1)-(5-phospho-beta-D-ribosyl)glycinamide + ADP + phosphate + H(+). The protein operates within purine metabolism; IMP biosynthesis via de novo pathway; N(2)-formyl-N(1)-(5-phospho-D-ribosyl)glycinamide from N(1)-(5-phospho-D-ribosyl)glycinamide (formate route): step 1/1. In terms of biological role, involved in the de novo purine biosynthesis. Catalyzes the transfer of formate to 5-phospho-ribosyl-glycinamide (GAR), producing 5-phospho-ribosyl-N-formylglycinamide (FGAR). Formate is provided by PurU via hydrolysis of 10-formyl-tetrahydrofolate. The protein is Formate-dependent phosphoribosylglycinamide formyltransferase of Stenotrophomonas maltophilia (strain R551-3).